We begin with the raw amino-acid sequence, 446 residues long: Casein kinase I homolog 1 (446 aa).

The Protein kinase domain maps to 12–274 (YKVGRRIGEG…FDATPDYDYL (263 aa)). Residues 18 to 26 (IGEGSFGVI) and lysine 41 each bind ATP. The active-site Proton acceptor is aspartate 131. Positions 308 to 430 (KSRNAETENQ…ETEAPKKKKS (123 aa)) are disordered. Phosphoserine is present on serine 329. Residues 332 to 345 (PALQNHASTQNVVS) show a composition bias toward polar residues. Residues 346–355 (KRSDYEKPFA) are compositionally biased toward basic and acidic residues. Over residues 360–397 (NSASDSAEPNQNSLPNPPTETKATTTVPDRSGLATNQP) the composition is skewed to polar residues. Positions 401–412 (DVHDSSEERVTR) are enriched in basic and acidic residues.

It belongs to the protein kinase superfamily. CK1 Ser/Thr protein kinase family. Casein kinase I subfamily.

The protein resides in the cytoplasm. It carries out the reaction L-seryl-[protein] + ATP = O-phospho-L-seryl-[protein] + ADP + H(+). The catalysed reaction is L-threonyl-[protein] + ATP = O-phospho-L-threonyl-[protein] + ADP + H(+). Casein kinases are operationally defined by their preferential utilization of acidic proteins such as caseins as substrates. The sequence is that of Casein kinase I homolog 1 (cki1) from Schizosaccharomyces pombe (strain 972 / ATCC 24843) (Fission yeast).